We begin with the raw amino-acid sequence, 423 residues long: Putative competence-damage inducible protein (423 aa).

It belongs to the CinA family.

The polypeptide is Putative competence-damage inducible protein (Streptococcus equi subsp. zooepidemicus (strain MGCS10565)).